The sequence spans 371 residues: Homoserine O-acetyltransferase (371 aa).

The region spanning 44 to 350 (NAILVEHAWT…SYGHDAFLLE (307 aa)) is the AB hydrolase-1 domain. S150 functions as the Nucleophile in the catalytic mechanism. Residue R217 participates in substrate binding. Catalysis depends on residues D311 and H344. Position 345 (D345) interacts with substrate.

It belongs to the AB hydrolase superfamily. MetX family. Homodimer.

It localises to the cytoplasm. It catalyses the reaction L-homoserine + acetyl-CoA = O-acetyl-L-homoserine + CoA. The protein operates within amino-acid biosynthesis; L-methionine biosynthesis via de novo pathway; O-acetyl-L-homoserine from L-homoserine: step 1/1. Functionally, transfers an acetyl group from acetyl-CoA to L-homoserine, forming acetyl-L-homoserine. This Pelobacter propionicus (strain DSM 2379 / NBRC 103807 / OttBd1) protein is Homoserine O-acetyltransferase.